The following is a 695-amino-acid chain: ATP-dependent zinc metalloprotease FtsH (695 aa).

Residues 1 to 15 lie on the Cytoplasmic side of the membrane; the sequence is MNNNKQPKQGNFVKN. Residues 16–36 form a helical membrane-spanning segment; sequence ILMWVILAIVVVVGFNFFFSS. Residues 37 to 139 are Extracellular-facing; sequence NQSSVDKISY…QASSSGMWVQ (103 aa). Residues 140-160 form a helical membrane-spanning segment; the sequence is ILSYIIPMLLFVGIFWLMMGG. At 161–695 the chain is on the cytoplasmic side; it reads MGARGGGGGG…KEKSEDETAE (535 aa). Residue 233 to 240 participates in ATP binding; sequence GPPGTGKT. H456 contributes to the Zn(2+) binding site. Residue E457 is part of the active site. Residues H460 and D532 each contribute to the Zn(2+) site. The interval 657–695 is disordered; the sequence is KDANANVDDFSNINIYNGDEKTDSKPEENKEKSEDETAE. The segment covering 674-695 has biased composition (basic and acidic residues); that stretch reads GDEKTDSKPEENKEKSEDETAE.

This sequence in the central section; belongs to the AAA ATPase family. The protein in the C-terminal section; belongs to the peptidase M41 family. Homohexamer. The cofactor is Zn(2+).

It is found in the cell membrane. Acts as a processive, ATP-dependent zinc metallopeptidase for both cytoplasmic and membrane proteins. Plays a role in the quality control of integral membrane proteins. The protein is ATP-dependent zinc metalloprotease FtsH of Lactococcus lactis subsp. lactis (strain IL1403) (Streptococcus lactis).